The primary structure comprises 153 residues: Cell division protein SepF (153 aa).

This sequence belongs to the SepF family. In terms of assembly, homodimer. Interacts with FtsZ.

It localises to the cytoplasm. Functionally, cell division protein that is part of the divisome complex and is recruited early to the Z-ring. Probably stimulates Z-ring formation, perhaps through the cross-linking of FtsZ protofilaments. Its function overlaps with FtsA. The polypeptide is Cell division protein SepF (Clostridium novyi (strain NT)).